We begin with the raw amino-acid sequence, 290 residues long: Inositol-1-monophosphatase (290 aa).

Mg(2+)-binding residues include Glu83, Asp104, Ile106, and Asp107. Glu83 is a substrate binding site. Residues 106 to 109, Arg206, and Asp235 each bind substrate; that span reads IDGT. Position 235 (Asp235) interacts with Mg(2+).

Belongs to the inositol monophosphatase superfamily. Mg(2+) is required as a cofactor.

It catalyses the reaction a myo-inositol phosphate + H2O = myo-inositol + phosphate. This chain is Inositol-1-monophosphatase (suhB), found in Mycobacterium bovis (strain ATCC BAA-935 / AF2122/97).